Consider the following 119-residue polypeptide: Holo-[acyl-carrier-protein] synthase (119 aa).

The Mg(2+) site is built by Asp8 and Glu58.

It belongs to the P-Pant transferase superfamily. AcpS family. Mg(2+) is required as a cofactor.

The protein localises to the cytoplasm. The catalysed reaction is apo-[ACP] + CoA = holo-[ACP] + adenosine 3',5'-bisphosphate + H(+). Its function is as follows. Transfers the 4'-phosphopantetheine moiety from coenzyme A to a Ser of acyl-carrier-protein. The sequence is that of Holo-[acyl-carrier-protein] synthase from Geobacillus sp. (strain WCH70).